A 443-amino-acid polypeptide reads, in one-letter code: Threonine/serine transporter TdcC (443 aa).

11 consecutive transmembrane segments (helical) span residues 22-42 (TTWTLGLFGTAIGAGVLFFPI), 44-64 (AGFGGLIPILVMLVLAYPIAF), 97-117 (GVVITFLYFFAICPLLWIYGV), 135-155 (ALNRGFVALFLLLLMAVIIWF), 163-183 (VMSFLVWPFIASLVLISLSLI), 207-227 (ILVTVWLGISIMVFSFNFSPI), 259-279 (ASILMVAVVMFFAFSCLFALS), 319-339 (ASIIALVAIFKSFFGHYLGTL), 366-386 (LSMVFIMGSTWLVAYVNPNIL), 389-409 (IEAMGAPIIASLLCLLPMYAI), and 422-442 (IDNVFVTAIGLLTISNIVYKV).

The protein belongs to the amino acid/polyamine transporter 2 family. SdaC/TdcC subfamily.

It is found in the cell inner membrane. The catalysed reaction is L-threonine(in) + H(+)(in) = L-threonine(out) + H(+)(out). It carries out the reaction L-serine(in) + H(+)(in) = L-serine(out) + H(+)(out). Its function is as follows. Involved in the import of threonine and serine into the cell, with the concomitant import of a proton (symport system). In Escherichia fergusonii (strain ATCC 35469 / DSM 13698 / CCUG 18766 / IAM 14443 / JCM 21226 / LMG 7866 / NBRC 102419 / NCTC 12128 / CDC 0568-73), this protein is Threonine/serine transporter TdcC.